A 283-amino-acid polypeptide reads, in one-letter code: Elongation factor Ts (283 aa).

Residues 80–83 (TDFV) are involved in Mg(2+) ion dislocation from EF-Tu.

Belongs to the EF-Ts family.

It is found in the cytoplasm. Its function is as follows. Associates with the EF-Tu.GDP complex and induces the exchange of GDP to GTP. It remains bound to the aminoacyl-tRNA.EF-Tu.GTP complex up to the GTP hydrolysis stage on the ribosome. This is Elongation factor Ts from Haemophilus influenzae (strain PittEE).